The primary structure comprises 69 residues: Toxin Lc b (69 aa).

4 cysteine pairs are disulfide-bonded: Cys3-Cys20, Cys13-Cys41, Cys45-Cys56, and Cys57-Cys62.

The protein belongs to the three-finger toxin family. Long-chain subfamily. Type II alpha-neurotoxin sub-subfamily. In terms of tissue distribution, expressed by the venom gland.

It is found in the secreted. Binds with high affinity to muscular nicotinic acetylcholine receptors (nAChRs), whereas it binds with a low affinity to neuronal alpha-7/CHRNA7 nAChRs. This chain is Toxin Lc b, found in Laticauda colubrina (Yellow-lipped sea krait).